The chain runs to 199 residues: Putative AgrB-like protein (199 aa).

The next 5 membrane-spanning stretches (helical) occupy residues 43-63, 81-101, 108-128, 139-159, and 165-185; these read IIIF…FSFI, YGCL…TRLF, FYIV…PCPN, LKIL…LSPL, and ILIS…KGVI.

Belongs to the AgrB family.

The protein resides in the cell membrane. Its function is as follows. May be involved in the proteolytic processing of a quorum sensing system signal molecule precursor. The sequence is that of Putative AgrB-like protein (cfg02) from Clostridium beijerinckii (Clostridium MP).